The primary structure comprises 384 residues: Chaperone protein DnaJ (384 aa).

One can recognise a J domain in the interval 5–69 (DYYKVLGVDR…QKRAQYDQFG (65 aa)). Residues 141 to 223 (GKKTQVSYTR…CGGKGTVERK (83 aa)) form a CR-type zinc finger. Cys154, Cys157, Cys171, Cys174, Cys197, Cys200, Cys211, and Cys214 together coordinate Zn(2+). CXXCXGXG motif repeat units follow at residues 154 to 161 (CETCGGNG), 171 to 178 (CDKCHGTG), 197 to 204 (CDKCNGRG), and 211 to 218 (CKTCGGKG).

It belongs to the DnaJ family. Homodimer. The cofactor is Zn(2+).

Its subcellular location is the cytoplasm. Its function is as follows. Participates actively in the response to hyperosmotic and heat shock by preventing the aggregation of stress-denatured proteins and by disaggregating proteins, also in an autonomous, DnaK-independent fashion. Unfolded proteins bind initially to DnaJ; upon interaction with the DnaJ-bound protein, DnaK hydrolyzes its bound ATP, resulting in the formation of a stable complex. GrpE releases ADP from DnaK; ATP binding to DnaK triggers the release of the substrate protein, thus completing the reaction cycle. Several rounds of ATP-dependent interactions between DnaJ, DnaK and GrpE are required for fully efficient folding. Also involved, together with DnaK and GrpE, in the DNA replication of plasmids through activation of initiation proteins. In Lactobacillus acidophilus (strain ATCC 700396 / NCK56 / N2 / NCFM), this protein is Chaperone protein DnaJ.